Here is a 505-residue protein sequence, read N- to C-terminus: L-arabinose isomerase (505 aa).

Residues glutamate 308, glutamate 335, histidine 352, and histidine 453 each coordinate Mn(2+).

The protein belongs to the arabinose isomerase family. It depends on Mn(2+) as a cofactor.

The enzyme catalyses beta-L-arabinopyranose = L-ribulose. The protein operates within carbohydrate degradation; L-arabinose degradation via L-ribulose; D-xylulose 5-phosphate from L-arabinose (bacterial route): step 1/3. Its function is as follows. Catalyzes the conversion of L-arabinose to L-ribulose. The protein is L-arabinose isomerase of Bifidobacterium animalis subsp. lactis (strain AD011).